Consider the following 89-residue polypeptide: Small ribosomal subunit protein uS15 (89 aa).

Belongs to the universal ribosomal protein uS15 family. Part of the 30S ribosomal subunit. Forms a bridge to the 50S subunit in the 70S ribosome, contacting the 23S rRNA.

Functionally, one of the primary rRNA binding proteins, it binds directly to 16S rRNA where it helps nucleate assembly of the platform of the 30S subunit by binding and bridging several RNA helices of the 16S rRNA. Its function is as follows. Forms an intersubunit bridge (bridge B4) with the 23S rRNA of the 50S subunit in the ribosome. This Baumannia cicadellinicola subsp. Homalodisca coagulata protein is Small ribosomal subunit protein uS15.